The following is a 1069-amino-acid chain: Degenerin-like protein del-10 (1069 aa).

Residues 1 to 95 are Cytoplasmic-facing; that stretch reads MVRMAERLAE…LNAASPVTRG (95 aa). Residues 96-116 traverse the membrane as a helical segment; sequence LWCMIIIAFVILVLVQCYSQI. At 117–830 the chain is on the extracellular side; sequence KLYISEPVAT…FWSLACDIGG (714 aa). N-linked (GlcNAc...) asparagine glycans are attached at residues Asn216, Asn290, Asn374, Asn454, Asn539, Asn545, and Asn584. Residues 831-851 form a helical membrane-spanning segment; sequence ALGLFLGASLLTIIEIVYLCI. The Cytoplasmic portion of the chain corresponds to 852–1069; sequence QYGLCGKRAR…EEDDDKHSYV (218 aa). Disordered regions lie at residues 898-948 and 960-1069; these read KKSQ…TLTP and RNSQ…HSYV. The span at 915–928 shows a compositional bias: basic and acidic residues; it reads GDKFRSRASSEESK. The span at 938–948 shows a compositional bias: polar residues; sequence NDPSGNSTLTP. The span at 967–978 shows a compositional bias: basic and acidic residues; sequence YHDDHHPEDHYY.

This sequence belongs to the amiloride-sensitive sodium channel (TC 1.A.6) family.

The protein resides in the membrane. In Caenorhabditis elegans, this protein is Degenerin-like protein del-10.